The chain runs to 119 residues: Large ribosomal subunit protein bL20 (119 aa).

The protein belongs to the bacterial ribosomal protein bL20 family.

In terms of biological role, binds directly to 23S ribosomal RNA and is necessary for the in vitro assembly process of the 50S ribosomal subunit. It is not involved in the protein synthesizing functions of that subunit. This chain is Large ribosomal subunit protein bL20, found in Clostridium botulinum (strain Alaska E43 / Type E3).